Here is a 304-residue protein sequence, read N- to C-terminus: Cell surface-binding protein OPG105 (304 aa).

The 235-residue stretch at 1–235 (MPQQLSPINI…NDDTQVYYSG (235 aa)) folds into the Alpha-carbonic anhydrase domain. Topologically, residues 1–275 (MPQQLSPINI…YQKYIEENKT (275 aa)) are virion surface. Residues 276–294 (FAIIAIVFVFILTAILFFM) traverse the membrane as a helical segment. At 295–304 (SRRYSREKQN) the chain is on the intravirion side.

The protein belongs to the alpha-carbonic anhydrase family. As to quaternary structure, homodimer; disulfide-linked. In terms of processing, apparently non-glycosylated.

Its subcellular location is the virion membrane. In terms of biological role, binds to chondroitin sulfate on the cell surface to provide virion attachment to target cell. This Bos taurus (Bovine) protein is Cell surface-binding protein OPG105 (OPG105).